The chain runs to 399 residues: UDP-N-acetylglucosamine--N-acetylmuramyl-(pentapeptide) pyrophosphoryl-undecaprenol N-acetylglucosamine transferase (399 aa).

Residues 1–21 (MTSRFGHSHHPRRGRSARARA) show a composition bias toward basic residues. Positions 1 to 30 (MTSRFGHSHHPRRGRSARARAGRREGVQSN) are disordered. Residues 58–60 (TGG), N170, R206, S234, I288, and Q333 each bind UDP-N-acetyl-alpha-D-glucosamine.

It belongs to the glycosyltransferase 28 family. MurG subfamily.

It is found in the cell inner membrane. The catalysed reaction is di-trans,octa-cis-undecaprenyl diphospho-N-acetyl-alpha-D-muramoyl-L-alanyl-D-glutamyl-meso-2,6-diaminopimeloyl-D-alanyl-D-alanine + UDP-N-acetyl-alpha-D-glucosamine = di-trans,octa-cis-undecaprenyl diphospho-[N-acetyl-alpha-D-glucosaminyl-(1-&gt;4)]-N-acetyl-alpha-D-muramoyl-L-alanyl-D-glutamyl-meso-2,6-diaminopimeloyl-D-alanyl-D-alanine + UDP + H(+). Its pathway is cell wall biogenesis; peptidoglycan biosynthesis. Its function is as follows. Cell wall formation. Catalyzes the transfer of a GlcNAc subunit on undecaprenyl-pyrophosphoryl-MurNAc-pentapeptide (lipid intermediate I) to form undecaprenyl-pyrophosphoryl-MurNAc-(pentapeptide)GlcNAc (lipid intermediate II). The protein is UDP-N-acetylglucosamine--N-acetylmuramyl-(pentapeptide) pyrophosphoryl-undecaprenol N-acetylglucosamine transferase of Acidovorax ebreus (strain TPSY) (Diaphorobacter sp. (strain TPSY)).